The chain runs to 539 residues: GMP synthase [glutamine-hydrolyzing] (539 aa).

Residues 4–203 (KILILDFGSQ…VHDICGCKSD (200 aa)) form the Glutamine amidotransferase type-1 domain. Residue cysteine 82 is the Nucleophile of the active site. Active-site residues include histidine 177 and glutamate 179. Residues 204 to 395 (WNMPDYIAEA…LGLPHDMVYR (192 aa)) form the GMPS ATP-PPase domain. 231-237 (SGGVDSS) contacts ATP.

As to quaternary structure, homodimer.

It catalyses the reaction XMP + L-glutamine + ATP + H2O = GMP + L-glutamate + AMP + diphosphate + 2 H(+). Its pathway is purine metabolism; GMP biosynthesis; GMP from XMP (L-Gln route): step 1/1. In terms of biological role, catalyzes the synthesis of GMP from XMP. This is GMP synthase [glutamine-hydrolyzing] from Janthinobacterium sp. (strain Marseille) (Minibacterium massiliensis).